The following is a 572-amino-acid chain: 3-ketosteroid oxygenase (572 aa).

The next 2 membrane-spanning stretches (helical) occupy residues 52-72 (AFAL…RNFL) and 84-104 (YFMR…FIRI).

Belongs to the cytochrome P450 family. Expressed in the 2 embryonic head hypodermal cells XXXL/R.

It localises to the membrane. The enzyme catalyses 5alpha-cholest-7-en-3-one + 3 reduced [NADPH--hemoprotein reductase] + 3 O2 = (25S)-Delta7-dafachronate + 3 oxidized [NADPH--hemoprotein reductase] + 4 H2O + 4 H(+). It catalyses the reaction cholest-4-en-3-one + 3 reduced [NADPH--hemoprotein reductase] + 3 O2 = (25S)-3-oxocholest-4-en-26-oate + 3 oxidized [NADPH--hemoprotein reductase] + 4 H2O + 4 H(+). It functions in the pathway steroid hormone biosynthesis; dafachronic acid biosynthesis. In terms of biological role, converts the 3-keto steroids 4-cholesten-3-one and lathosterone into the carboxylic metabolites 3-keto-4-cholestenate (Delta(4)-dafachronic acid, Delta(4)-DA) and 3-keto-7,(5a)-cholestenate (Delta(7)-dafachronic acid, Delta(7)-DA) respectively, by catalyzing successive oxidations at C-26. Dafachronic acids bind directly to the nuclear hormone receptor (NHR) DAF-12, suppressing dauer formation and inducing reproductive growth. In a non-cell autonomous manner, negatively regulates body wall muscle arm extensions to motor neurons probably by preventing daf-12 isoform b activation. May be involved in thermotolerance. The chain is 3-ketosteroid oxygenase (daf-9) from Caenorhabditis elegans.